Here is a 148-residue protein sequence, read N- to C-terminus: Homoprotocatechuate degradative operon repressor (148 aa).

In terms of domain architecture, HTH marR-type spans 2 to 134; the sequence is HDSLTIALLQ…LTHLLEEFIA (133 aa).

Functionally, repressor for the homoprotocatechuate catabolic pathway hpc operon. The sequence is that of Homoprotocatechuate degradative operon repressor (hpcR) from Escherichia coli.